The following is a 108-amino-acid chain: Transcription factor S (108 aa).

Zn(2+) is bound by residues Cys5, Cys8, Cys21, Cys24, Cys69, Cys72, Cys97, and Cys100. The segment at 5 to 24 (CPKCNNLMLPKDGKLKCAVC) adopts a C4-type zinc-finger fold. The TFIIS-type zinc-finger motif lies at 65-105 (TRIECPKCGHNEAYWWLQQTRCADEPETRFYKCKKCGHTWR).

This sequence belongs to the archaeal RpoM/eukaryotic RPA12/RPB9/RPC11 RNA polymerase family.

Induces RNA cleavage activity in the RNA polymerase. In its presence, the cleavage activity of the RNA polymerase truncates the RNA back to position +15 in a stepwise manner by releasing mainly dinucleotides from the 3'-end of the nascent RNA. The truncated RNAs are able to continue elongation. Involved in transcriptional proofreading and fidelity. Misincorporation of nucleotides during elongation of transcription leads to arrested elongation complexes which are rescued by TFS-promoted removal of a dinucleotide from the 3'-end. TFS is able to induce a cleavage resynthesis cycle in stalled elongation complexes (resulting from the next missing nucleotide or a reduced incorporation rate of a wrong nucleotide) preventing misincorporation and enabling proofreading in a post-incorporation manner. Pausing of elongation complexes is the main determinant of TFS-induced RNA cleavage. The sequence is that of Transcription factor S from Methanocaldococcus jannaschii (strain ATCC 43067 / DSM 2661 / JAL-1 / JCM 10045 / NBRC 100440) (Methanococcus jannaschii).